We begin with the raw amino-acid sequence, 255 residues long: F-box/SPRY domain-containing protein 1 (255 aa).

The region spanning 3–51 (DRVAALCNYNVLEVVFSYLDLNDLGRCSQVCKSWFHFLNDENSDVWRFH) is the F-box domain. The B30.2/SPRY domain maps to 61–253 (TKSELLSPVP…VSMVYCGTPL (193 aa)).

It belongs to the FBXO45/Fsn family. As to quaternary structure, component of an E3 ubiquitin ligase complex composed of hiw and Fsn.

It localises to the synapse. The protein operates within protein modification; protein ubiquitination. Its function is as follows. Required in the presynaptic motoneuron to down-regulate the levels of wnd and restrain synaptic terminal growth at the neuromuscular junction (NMJ). This chain is F-box/SPRY domain-containing protein 1, found in Drosophila persimilis (Fruit fly).